A 60-amino-acid polypeptide reads, in one-letter code: Large ribosomal subunit protein uL30 (60 aa).

Belongs to the universal ribosomal protein uL30 family. As to quaternary structure, part of the 50S ribosomal subunit.

The protein is Large ribosomal subunit protein uL30 of Leuconostoc citreum (strain KM20).